The primary structure comprises 722 residues: D-(-)-3-hydroxybutyrate oligomer hydrolase (722 aa).

The span at 1–11 (MQQRHLSQSAH) shows a compositional bias: polar residues. A disordered region spans residues 1–20 (MQQRHLSQSAHSHGHGTRRA). The first 36 residues, 1–36 (MQQRHLSQSAHSHGHGTRRAHRRNTIAIAVATLAVA), serve as a signal peptide directing secretion. Serine 327 serves as the catalytic Charge relay system. The segment at 671–697 (PPSQVVRTTPRGGADTDTVGPRIQPSN) is disordered.

Belongs to the D-(-)-3-hydroxybutyrate oligomer hydrolase family.

It is found in the secreted. The enzyme catalyses (3R)-hydroxybutanoate dimer + H2O = 2 (R)-3-hydroxybutanoate + H(+). It participates in lipid metabolism; butanoate metabolism. In terms of biological role, participates in the degradation of poly-3-hydroxybutyrate (PHB). It works downstream of poly(3-hydroxybutyrate) depolymerase, hydrolyzing D(-)-3-hydroxybutyrate oligomers of various length (3HB-oligomers) into 3HB-monomers. The sequence is that of D-(-)-3-hydroxybutyrate oligomer hydrolase from Cupriavidus metallidurans (strain ATCC 43123 / DSM 2839 / NBRC 102507 / CH34) (Ralstonia metallidurans).